Reading from the N-terminus, the 617-residue chain is Phosphatidylinositol-3,5-bisphosphate 3-phosphatase MTMR6 (617 aa).

Positions 1 to 101 (MEHIRTTKVE…YNSLLQLSKQ (101 aa)) constitute a GRAM domain. Residues 2–141 (EHIRTTKVEQ…AEYERMGVPN (140 aa)) are interaction with RAB1B. The residue at position 108 (Tyr-108) is a Phosphotyrosine. In terms of domain architecture, Myotubularin phosphatase spans 124–499 (GWQLIDLAAE…FNFKFWRNMY (376 aa)). A 1,2-diacyl-sn-glycero-3-phospho-(1D-myo-inositol-3,5-bisphosphate) is bound by residues Asn-248, Asn-273, and Ile-274. Residues Asn-248, Asn-273, and Ile-274 each contribute to the a 1,2-diacyl-sn-glycero-3-phospho-(1D-myo-inositol-3-phosphate) site. The active-site Phosphocysteine intermediate is the Cys-336. A 1,2-diacyl-sn-glycero-3-phospho-(1D-myo-inositol-3,5-bisphosphate) is bound by residues Ser-337, Asp-338, Gly-339, Trp-340, Asp-341, Arg-342, Lys-378, and Arg-382. Positions 337, 338, 339, 340, 341, and 342 each coordinate a 1,2-diacyl-sn-glycero-3-phospho-(1D-myo-inositol-3-phosphate). An a 1,2-diacyl-sn-glycero-3-phospho-(1D-myo-inositol-3-phosphate)-binding site is contributed by Arg-382. Phosphoserine is present on residues Ser-557, Ser-585, and Ser-607.

This sequence belongs to the protein-tyrosine phosphatase family. Non-receptor class myotubularin subfamily. In terms of assembly, homodimer. Heterodimer (via C-terminus) with MTMR9 (via C-terminus). Interacts with ALKBH4. Interacts with KCNN4. Interacts (via GRAM domain) with RAB1B (in GDP-bound form); the interaction regulates MTMR6 recruitment to the endoplasmic reticulum-Golgi intermediate compartment. Isoform 1: Ubiquitously expressed including in heart, brain, spleen, lung, liver, muscle, kidney and testis (at protein level). Isoform 2: Expressed in testis (at protein level).

It is found in the cytoplasm. The protein resides in the endoplasmic reticulum-Golgi intermediate compartment. It localises to the cell projection. Its subcellular location is the ruffle membrane. The protein localises to the endoplasmic reticulum. It catalyses the reaction a 1,2-diacyl-sn-glycero-3-phospho-(1D-myo-inositol-3,5-bisphosphate) + H2O = a 1,2-diacyl-sn-glycero-3-phospho-(1D-myo-inositol-5-phosphate) + phosphate. It carries out the reaction a 1,2-diacyl-sn-glycero-3-phospho-(1D-myo-inositol-3-phosphate) + H2O = a 1,2-diacyl-sn-glycero-3-phospho-(1D-myo-inositol) + phosphate. The enzyme catalyses 1,2-dioctanoyl-sn-glycero-3-phospho-(1D-myo-inositol-3,5-bisphosphate) + H2O = 1,2-dioctanoyl-sn-glycero-3-phospho-(1D-myo-inositol-5-phosphate) + phosphate. The catalysed reaction is 1,2-dioctanoyl-sn-glycero-3-phospho-(1-D-myo-inositol-3-phosphate) + H2O = 1,2-dioctanoyl-sn-glycero-3-phospho-(1D-myo-inositol) + phosphate. Allosterically activated by phosphatidylserine and/or phosphatidylinositol 4-phosphate (PtdIns(4)P), and phosphatidylinositol 5-phosphate (PtdIns(5)P). Interaction with MTMR9 increases catalytic activity towards phosphatidylinositol 3,5-bisphosphate. In terms of biological role, lipid phosphatase that specifically dephosphorylates the D-3 position of phosphatidylinositol 3-phosphate and phosphatidylinositol 3,5-bisphosphate, generating phosphatidylinositol and phosphatidylinositol 5-phosphate. Binds with high affinity to phosphatidylinositol 3,5-bisphosphate (PtdIns(3,5)P2) but also to phosphatidylinositol 3-phosphate (PtdIns(3)P), phosphatidylinositol 4-phosphate (PtdIns(4)P), and phosphatidylinositol 5-phosphate (PtdIns(5)P), phosphatidic acid and phosphatidylserine. Negatively regulates ER-Golgi protein transport. Probably in association with MTMR9, plays a role in the late stages of macropinocytosis by dephosphorylating phosphatidylinositol 3-phosphate in membrane ruffles. Acts as a negative regulator of KCNN4/KCa3.1 channel activity in CD4(+) T-cells possibly by decreasing intracellular levels of phosphatidylinositol 3-phosphate. Negatively regulates proliferation of reactivated CD4(+) T-cells. In complex with MTMR9, negatively regulates DNA damage-induced apoptosis. The formation of the MTMR6-MTMR9 complex stabilizes both MTMR6 and MTMR9 protein levels. This Mus musculus (Mouse) protein is Phosphatidylinositol-3,5-bisphosphate 3-phosphatase MTMR6.